The sequence spans 1257 residues: Liprin-alpha-2 (1257 aa).

3 disordered regions span residues 1-29 (MMCE…DSDS), 231-265 (ASSE…DSTD), and 438-463 (EGQL…EHNK). Low complexity predominate over residues 16–26 (SQRGSQSSGSD). 3 coiled-coil regions span residues 29–154 (SHFE…SLRM), 185–541 (KALD…SLIE), and 643–695 (HSDA…GLNL). Position 236 is a phosphoserine (serine 236). Threonine 237 is modified (phosphothreonine). A compositionally biased stretch (basic and acidic residues) spans 238 to 256 (ESEHLEGMEPGQKVHEKRL). Position 239 is a phosphoserine (serine 239). Serine 687 and serine 689 each carry phosphoserine. Low complexity-rich tracts occupy residues 709 to 725 (TASS…HSTP) and 798 to 813 (SSLS…GLGS). Disordered regions lie at residues 709 to 738 (TASS…EMDR) and 790 to 834 (SSYH…KSSI). Serine 817 and serine 820 each carry phosphoserine. SAM domains follow at residues 898–964 (WDGP…MVSL), 1020–1084 (NHEW…LKRL), and 1108–1177 (WSND…LLAL). A coiled-coil region spans residues 1081-1107 (LKRLNYDRKELERRREASQHEIKDVLV).

Belongs to the liprin family. Liprin-alpha subfamily. Forms homodimers and heterodimers with liprins-alpha and liprins-beta. Interacts with the second PTPase domain of PTPRD, PTPRF and PTPRS. Interacts with KIF1A; the interaction decreases in presence of calcium. In terms of tissue distribution, expressed only in brain.

The protein resides in the cytoplasm. It localises to the cell surface. Its subcellular location is the cell projection. The protein localises to the dendritic spine. Its function is as follows. Alters PTPRF cellular localization and induces PTPRF clustering. May regulate the disassembly of focal adhesions. May localize receptor-like tyrosine phosphatases type 2A at specific sites on the plasma membrane, possibly regulating their interaction with the extracellular environment and their association with substrates. In neuronal cells, is a scaffolding protein in the dendritic spines which acts as immobile postsynaptic post able to recruit KIF1A-driven dense core vesicles to dendritic spines. The sequence is that of Liprin-alpha-2 (PPFIA2) from Homo sapiens (Human).